The following is a 1405-amino-acid chain: DNA-directed RNA polymerase subunit beta' (1405 aa).

4 residues coordinate Zn(2+): cysteine 70, cysteine 72, cysteine 85, and cysteine 88. Aspartate 460, aspartate 462, and aspartate 464 together coordinate Mg(2+). Cysteine 814, cysteine 888, cysteine 895, and cysteine 898 together coordinate Zn(2+).

Belongs to the RNA polymerase beta' chain family. In terms of assembly, the RNAP catalytic core consists of 2 alpha, 1 beta, 1 beta' and 1 omega subunit. When a sigma factor is associated with the core the holoenzyme is formed, which can initiate transcription. Requires Mg(2+) as cofactor. It depends on Zn(2+) as a cofactor.

It carries out the reaction RNA(n) + a ribonucleoside 5'-triphosphate = RNA(n+1) + diphosphate. Functionally, DNA-dependent RNA polymerase catalyzes the transcription of DNA into RNA using the four ribonucleoside triphosphates as substrates. This chain is DNA-directed RNA polymerase subunit beta', found in Shewanella sp. (strain MR-7).